The following is a 532-amino-acid chain: Flavin-containing monooxygenase 1 (532 aa).

Residues 1–510 (MVKRVAIVGA…TRTVQETPST (510 aa)) are Lumenal-facing. FAD-binding positions include 9–13 (GAGVS), Glu-32, 40–41 (LW), and 61–62 (NS). Residues 60-61 (SN) and 195-198 (SGTD) contribute to the NADP(+) site. Residues 511-531 (FETLLKLFSFLALLVAVFFIF) form a helical membrane-spanning segment. A topological domain (cytoplasmic) is located at residue Leu-532.

The protein belongs to the FMO family. FAD serves as cofactor. As to expression, expressed in liver, lung and kidney and to a lesser extent in the heart and brain.

Its subcellular location is the endoplasmic reticulum membrane. It carries out the reaction hypotaurine + NADPH + O2 + H(+) = taurine + NADP(+) + H2O. The enzyme catalyses hypotaurine + NADH + O2 + H(+) = taurine + NAD(+) + H2O. The catalysed reaction is trimethylamine + NADPH + O2 = trimethylamine N-oxide + NADP(+) + H2O. It catalyses the reaction N,N-dimethylaniline + NADPH + O2 + H(+) = N,N-dimethylaniline N-oxide + NADP(+) + H2O. In terms of biological role, broad spectrum monooxygenase that catalyzes the oxygenation of a wide variety of nitrogen- and sulfur-containing compounds including xenobiotics. Catalyzes the S-oxygenation of hypotaurine to produce taurine, an organic osmolyte involved in cell volume regulation as well as a variety of cytoprotective and developmental processes. In vitro, catalyzes the N-oxygenation of trimethylamine (TMA) to produce trimethylamine N-oxide (TMAO) and could therefore participate to the detoxification of this compound that is generated by the action of gut microbiota from dietary precursors such as choline, choline containing compounds, betaine or L-carnitine. The polypeptide is Flavin-containing monooxygenase 1 (Rattus norvegicus (Rat)).